The chain runs to 141 residues: Nucleoside diphosphate kinase (141 aa).

ATP-binding residues include K9, F57, R85, T91, R102, and N112. H115 acts as the Pros-phosphohistidine intermediate in catalysis.

It belongs to the NDK family. As to quaternary structure, homotetramer. Mg(2+) serves as cofactor.

The protein resides in the cytoplasm. The catalysed reaction is a 2'-deoxyribonucleoside 5'-diphosphate + ATP = a 2'-deoxyribonucleoside 5'-triphosphate + ADP. It carries out the reaction a ribonucleoside 5'-diphosphate + ATP = a ribonucleoside 5'-triphosphate + ADP. Its function is as follows. Major role in the synthesis of nucleoside triphosphates other than ATP. The ATP gamma phosphate is transferred to the NDP beta phosphate via a ping-pong mechanism, using a phosphorylated active-site intermediate. The polypeptide is Nucleoside diphosphate kinase (Chlamydia abortus (strain DSM 27085 / S26/3) (Chlamydophila abortus)).